Consider the following 529-residue polypeptide: Zinc finger protein 490 (529 aa).

A disordered region spans residues 1 to 53 (MRRNSSLSFQMERPLEEQVQSKWSSSQGRTGTGGSDVLQMQNSEHHGQSIKTQ). Residues 57–132 (ISLEDVAVNF…ALCENKEDCP (76 aa)) enclose the KRAB domain. 13 consecutive C2H2-type zinc fingers follow at residues 156–178 (CDCSVCGEVFMHQVSLNRHMRSH), 194–216 (HKCKECGKTFTRSSSIRTHERIH), 222–244 (YECKECGKAFAFLFSFRNHIRIH), 250–272 (YECKECGKAFRYLTALRRHEKNH), 278–300 (YKCKQCGKAFIYYQPFLTHERTH), 306–328 (YECKQCGKAFSCPTYLRSHEKTH), 334–356 (FVCRECGRAFFSHSSLRKHVKTH), 362–384 (YTCKKCGEAFKSSSSCEVHERTH), 390–412 (YECKQCGKAFNSSSYLQLHERVH), 418–440 (YECKECGKAFLYSTHFRIHERTH), 446–468 (YECKQCGRVFIYFSHLRRHERSH), 474–496 (CECKQCGKAFTCLNSLKVHKRIH), and 502–524 (FQCRQCGKAFSYSKSLHVHERTH).

It belongs to the krueppel C2H2-type zinc-finger protein family.

The protein localises to the nucleus. Functionally, may be involved in transcriptional regulation. This Homo sapiens (Human) protein is Zinc finger protein 490 (ZNF490).